Consider the following 187-residue polypeptide: Elongation factor P (187 aa).

An N6-(3,6-diaminohexanoyl)-5-hydroxylysine modification is found at Lys-33.

Belongs to the elongation factor P family. In terms of processing, may be beta-lysylated on the epsilon-amino group of Lys-33 by the combined action of EpmA and EpmB, and then hydroxylated on the C5 position of the same residue by EpmC (if this protein is present). Lysylation is critical for the stimulatory effect of EF-P on peptide-bond formation. The lysylation moiety may extend toward the peptidyltransferase center and stabilize the terminal 3-CCA end of the tRNA. Hydroxylation of the C5 position on Lys-33 may allow additional potential stabilizing hydrogen-bond interactions with the P-tRNA.

The protein resides in the cytoplasm. It participates in protein biosynthesis; polypeptide chain elongation. Involved in peptide bond synthesis. Alleviates ribosome stalling that occurs when 3 or more consecutive Pro residues or the sequence PPG is present in a protein, possibly by augmenting the peptidyl transferase activity of the ribosome. Modification of Lys-33 is required for alleviation. The polypeptide is Elongation factor P (Blochmanniella floridana).